The primary structure comprises 256 residues: Geranylgeranylglyceryl phosphate synthase (256 aa).

Asp-28 and Ser-53 together coordinate Mg(2+). Sn-glycerol 1-phosphate-binding positions include 172–178, 203–204, and 225–226; these read YLEAGSG, GG, and GT.

This sequence belongs to the GGGP/HepGP synthase family. Group II subfamily. Mg(2+) serves as cofactor.

It is found in the cytoplasm. The enzyme catalyses sn-glycerol 1-phosphate + (2E,6E,10E)-geranylgeranyl diphosphate = sn-3-O-(geranylgeranyl)glycerol 1-phosphate + diphosphate. It participates in membrane lipid metabolism; glycerophospholipid metabolism. Its function is as follows. Prenyltransferase that catalyzes the transfer of the geranylgeranyl moiety of geranylgeranyl diphosphate (GGPP) to the C3 hydroxyl of sn-glycerol-1-phosphate (G1P). This reaction is the first ether-bond-formation step in the biosynthesis of archaeal membrane lipids. The chain is Geranylgeranylglyceryl phosphate synthase from Methanococcus maripaludis (strain C5 / ATCC BAA-1333).